The sequence spans 113 residues: Large ribosomal subunit protein eL31B (113 aa).

Belongs to the eukaryotic ribosomal protein eL31 family. In terms of assembly, component of the large ribosomal subunit (LSU). Mature yeast ribosomes consist of a small (40S) and a large (60S) subunit. The 40S small subunit contains 1 molecule of ribosomal RNA (18S rRNA) and 33 different proteins (encoded by 57 genes). The large 60S subunit contains 3 rRNA molecules (25S, 5.8S and 5S rRNA) and 46 different proteins (encoded by 81 genes).

The protein localises to the cytoplasm. In terms of biological role, component of the ribosome, a large ribonucleoprotein complex responsible for the synthesis of proteins in the cell. The small ribosomal subunit (SSU) binds messenger RNAs (mRNAs) and translates the encoded message by selecting cognate aminoacyl-transfer RNA (tRNA) molecules. The large subunit (LSU) contains the ribosomal catalytic site termed the peptidyl transferase center (PTC), which catalyzes the formation of peptide bonds, thereby polymerizing the amino acids delivered by tRNAs into a polypeptide chain. The nascent polypeptides leave the ribosome through a tunnel in the LSU and interact with protein factors that function in enzymatic processing, targeting, and the membrane insertion of nascent chains at the exit of the ribosomal tunnel. The polypeptide is Large ribosomal subunit protein eL31B (Saccharomyces cerevisiae (strain ATCC 204508 / S288c) (Baker's yeast)).